Reading from the N-terminus, the 602-residue chain is Elongation factor 4 (602 aa).

In terms of domain architecture, tr-type G spans 6 to 188 (DHIRNFSIVA…AIVNKLPAPK (183 aa)). GTP contacts are provided by residues 18-23 (DHGKST) and 135-138 (NKID).

Belongs to the TRAFAC class translation factor GTPase superfamily. Classic translation factor GTPase family. LepA subfamily.

It localises to the cell inner membrane. The enzyme catalyses GTP + H2O = GDP + phosphate + H(+). Its function is as follows. Required for accurate and efficient protein synthesis under certain stress conditions. May act as a fidelity factor of the translation reaction, by catalyzing a one-codon backward translocation of tRNAs on improperly translocated ribosomes. Back-translocation proceeds from a post-translocation (POST) complex to a pre-translocation (PRE) complex, thus giving elongation factor G a second chance to translocate the tRNAs correctly. Binds to ribosomes in a GTP-dependent manner. This is Elongation factor 4 from Brucella melitensis biotype 2 (strain ATCC 23457).